The following is a 464-amino-acid chain: Phosphoglucosamine mutase (464 aa).

Catalysis depends on Ser112, which acts as the Phosphoserine intermediate. The Mg(2+) site is built by Ser112, Asp252, Asp254, and Asp256. Phosphoserine is present on Ser112.

The protein belongs to the phosphohexose mutase family. Mg(2+) serves as cofactor. Post-translationally, activated by phosphorylation.

It catalyses the reaction alpha-D-glucosamine 1-phosphate = D-glucosamine 6-phosphate. In terms of biological role, catalyzes the conversion of glucosamine-6-phosphate to glucosamine-1-phosphate. In Synechococcus sp. (strain CC9605), this protein is Phosphoglucosamine mutase.